The following is a 247-amino-acid chain: EGF-like domain-containing protein C02B10.3 (247 aa).

Residues 1-17 (MTGALCIVLFGVTMVTA) form the signal peptide. At 18–220 (ERPKIKDTHG…LCDKRCQKGH (203 aa)) the chain is on the extracellular side. EGF-like domains are found at residues 114 to 150 (FGTS…RFCE) and 180 to 213 (SGAS…DLCD). 4 disulfides stabilise this stretch: cysteine 123/cysteine 138, cysteine 140/cysteine 149, cysteine 190/cysteine 201, and cysteine 203/cysteine 212. Asparagine 126 is a glycosylation site (N-linked (GlcNAc...) asparagine). The helical transmembrane segment at 221-240 (VTCSTCSSFIPAALFAIILL) threads the bilayer. The Cytoplasmic segment spans residues 241 to 247 (CVNKFNY).

It localises to the membrane. This Caenorhabditis elegans protein is EGF-like domain-containing protein C02B10.3.